The sequence spans 473 residues: MLILWTIPLFLLGAAQGKEVCYDNLGCFSDAEPWAGTAIRPLKLLPWSPEKINTRFLLYTNENPTAFQTLQLSDPSTIEASNFQVARKTRFIIHGFIDKGEENWVVDMCKNMFQVEEVNCICVDWKRGSQTTYTQAANNVRVVGAQVAQMIDILVRNFNYSASKVHLIGHSLGAHVAGEAGSRTPGLGRITGLDPVEANFEGTPEEVRLDPSDADFVDVIHTDAAPLIPFLGFGTNQMVGHFDFFPNGGQYMPGCKKNALSQIVDIDGIWSGTRDFVACNHLRSYKYYLESILNPDGFAAYPCASYRDFESNKCFPCPDQGCPQMGHYADKFANNTSVEPQKFFLNTGEAKNFARWRYRVSLTFSGRTVTGQVKVSLFGSNGNTRQCDIFRGIIKPGATHSNEFDAKLDVGTIEKVKFLWNNHVVNPSFPKVGAAKITVQKGEERTEHNFCSEETVREDILLTLLPCKTSDTM.

The first 17 residues, 1-17, serve as a signal peptide directing secretion; that stretch reads MLILWTIPLFLLGAAQG. Cystine bridges form between cysteine 21–cysteine 27 and cysteine 109–cysteine 120. Serine 171 acts as the Nucleophile in catalysis. The active-site Charge relay system is aspartate 194. Residues glutamate 205, arginine 208, aspartate 210, and aspartate 213 each contribute to the Ca(2+) site. An intrachain disulfide couples cysteine 255 to cysteine 279. The Charge relay system role is filled by histidine 281. 3 disulfides stabilise this stretch: cysteine 303–cysteine 314, cysteine 317–cysteine 322, and cysteine 451–cysteine 467. In terms of domain architecture, PLAT spans 356–467; the sequence is WRYRVSLTFS…EDILLTLLPC (112 aa).

Belongs to the AB hydrolase superfamily. Lipase family. As to expression, expressed in female, but not in male, lacrimal gland. Expressed in male and female sublingual gland and pancreas.

The protein localises to the secreted. May function as inhibitor of dietary triglyceride digestion. Lacks detectable lipase activity (in vitro). In Mus musculus (Mouse), this protein is Inactive pancreatic lipase-related protein 1 (Pnliprp1).